The following is a 655-amino-acid chain: Tumor necrosis factor receptor superfamily member 21 (655 aa).

The N-terminal stretch at Met1–Ala41 is a signal peptide. The Extracellular segment spans residues Gln42–His349. TNFR-Cys repeat units follow at residues Leu50–Cys88, Ser90–Cys131, Cys133–Arg167, and Gln170–Cys211. Intrachain disulfides connect Cys67/Cys80, Cys70/Cys88, Cys91/Cys106, Cys109/Cys123, Cys113/Cys131, Cys133/Cys144, Cys150/Cys168, Cys171/Cys186, and Cys192/Cys211. Residue Asn82 is glycosylated (N-linked (GlcNAc...) asparagine). 2 disordered regions span residues His214–His306 and Glu318–Gln338. A compositionally biased stretch (low complexity) spans Ser216–Pro225. Polar residues-rich tracts occupy residues Val241–Val262 and Pro276–Gln302. Residues Asn252, Asn278, and Asn289 are each glycosylated (N-linked (GlcNAc...) asparagine). Residues Leu350–Ile370 form a helical membrane-spanning segment. Residue Cys368 is the site of S-palmitoyl cysteine attachment. The Cytoplasmic segment spans residues Arg371–Leu655. Residues Gly415–Met498 form the Death domain.

Associates with TRADD. Interacts with NGFR. Interacts with CASP8. In terms of processing, oxidized in response to reactive oxygen species (ROS), leading to endocytosis. As to expression, detected in brain (at protein level). Detected in corpus callosum oligodendrocytes. Detected in embryonic and adult brain.

Its subcellular location is the cell membrane. Its function is as follows. Promotes apoptosis, possibly via a pathway that involves the activation of NF-kappa-B. Can also promote apoptosis mediated by BAX and by the release of cytochrome c from the mitochondria into the cytoplasm. Trophic-factor deprivation triggers the cleavage of surface APP by beta-secretase to release sAPP-beta which is further cleaved to release an N-terminal fragment of APP (N-APP). Negatively regulates oligodendrocyte survival, maturation and myelination. Plays a role in signaling cascades triggered by stimulation of T-cell receptors, in the adaptive immune response and in the regulation of T-cell differentiation and proliferation. Negatively regulates T-cell responses and the release of cytokines such as IL4, IL5, IL10, IL13 and IFNG by Th2 cells. Negatively regulates the production of IgG, IgM and IgM in response to antigens. May inhibit the activation of JNK in response to T-cell stimulation. Also acts as a regulator of pyroptosis: recruits CASP8 in response to reactive oxygen species (ROS) and subsequent oxidation, leading to activation of GSDMC. The chain is Tumor necrosis factor receptor superfamily member 21 (Tnfrsf21) from Rattus norvegicus (Rat).